The primary structure comprises 209 residues: Uracil phosphoribosyltransferase (209 aa).

5-phospho-alpha-D-ribose 1-diphosphate-binding positions include arginine 79, arginine 104, and 131–139 (DPMLATGGS). Uracil contacts are provided by residues isoleucine 194 and 199 to 201 (GDA). Aspartate 200 provides a ligand contact to 5-phospho-alpha-D-ribose 1-diphosphate.

Belongs to the UPRTase family. The cofactor is Mg(2+).

The catalysed reaction is UMP + diphosphate = 5-phospho-alpha-D-ribose 1-diphosphate + uracil. Its pathway is pyrimidine metabolism; UMP biosynthesis via salvage pathway; UMP from uracil: step 1/1. Allosterically activated by GTP. Its function is as follows. Catalyzes the conversion of uracil and 5-phospho-alpha-D-ribose 1-diphosphate (PRPP) to UMP and diphosphate. This Anoxybacillus flavithermus (strain DSM 21510 / WK1) protein is Uracil phosphoribosyltransferase.